Here is a 262-residue protein sequence, read N- to C-terminus: Glycine and serine-rich protein 1 (262 aa).

Residues 1–21 (MVIKTSLTVLILGVLIAEVFC) form the signal peptide. Asparagine 59 carries an N-linked (GlcNAc...) asparagine glycan. Residues 172 to 212 (SNGGWGAETGSSGGMNSQSSGSQSGSWGSSSGSWGGSSGSM) are disordered. Residues 174-184 (GGWGAETGSSG) show a composition bias toward gly residues. A compositionally biased stretch (low complexity) spans 185–203 (GMNSQSSGSQSGSWGSSSG).

In terms of tissue distribution, component of the acid-insoluble and acid-soluble organic matrix of calcified layers of the shell (at protein level).

It is found in the secreted. The sequence is that of Glycine and serine-rich protein 1 from Lottia gigantea (Giant owl limpet).